Consider the following 349-residue polypeptide: Secondary metabolism regulator LAE1 (349 aa).

A disordered region spans residues 1–46 (MSSRNAPSGCVAPSPATAAPPSPTNLRLTVGQSGSESANEPGGEPE). The segment covering 25–38 (NLRLTVGQSGSESA) has biased composition (polar residues).

Belongs to the methyltransferase superfamily. LaeA methyltransferase family. As to quaternary structure, component of the heterotrimeric velvet complex composed of LAE1, VEL1 and VEL2; VEL1 acting as a bridging protein between LAE1 and VEL2.

It is found in the nucleus. It carries out the reaction L-methionyl-[protein] + S-adenosyl-L-methionine = S-methyl-L-methionyl-[protein] + S-adenosyl-L-homocysteine. Its function is as follows. Methyltransferase that performs automethylation. No other methyl-accepting substrate has been identified yet. Component of the velvet transcription factor complex that acts as a global regulator for secondary metabolite gene expression. Controls the expression of the gamma-pentyl-pyrone gene clusters. Required for the expression of cellulase. Regulates asexual sporulation (conidiation) by environmental stimuli such as light and/or mechanical injury. Required for oxidative stress tolerance. Also plays a role in defense and parasitism on other fungi. The polypeptide is Secondary metabolism regulator LAE1 (Hypocrea atroviridis (strain ATCC 20476 / IMI 206040) (Trichoderma atroviride)).